Consider the following 338-residue polypeptide: Malate dehydrogenase, mitochondrial (338 aa).

Residues 1–24 (MLSALARPAGAALRRSFSTSXQNN) constitute a mitochondrion transit peptide. NAD(+) contacts are provided by residues 31-37 (GASGGIG) and Asp-57. O-linked (GlcNAc) serine glycosylation is present at Ser-33. An N6-acetyllysine; alternate mark is found at Lys-78 and Lys-91. N6-succinyllysine; alternate is present on residues Lys-78 and Lys-91. Positions 104 and 110 each coordinate substrate. NAD(+) contacts are provided by residues Asn-117 and 140–142 (ISN). Asn-142 contributes to the substrate binding site. Lys-165 is modified (N6-acetyllysine). Residue Arg-176 participates in substrate binding. Lys-185 bears the N6-acetyllysine; alternate mark. Lys-185 is subject to N6-succinyllysine; alternate. Catalysis depends on His-200, which acts as the Proton acceptor. Lys-203 is modified (N6-succinyllysine). N6-acetyllysine; alternate occurs at positions 215 and 239. An N6-succinyllysine; alternate mark is found at Lys-215 and Lys-239. Lys-239 is subject to N6-malonyllysine; alternate. At Ser-246 the chain carries Phosphoserine. Residue Met-251 participates in NAD(+) binding. Lys-269 carries the post-translational modification N6-succinyllysine. 5 positions are modified to N6-acetyllysine; alternate: Lys-296, Lys-301, Lys-307, Lys-314, and Lys-324. 5 positions are modified to N6-succinyllysine; alternate: Lys-296, Lys-301, Lys-307, Lys-314, and Lys-324. Lys-307 carries the N6-malonyllysine; alternate modification. Position 326 is a phosphoserine (Ser-326). N6-acetyllysine; alternate is present on residues Lys-328, Lys-329, and Lys-335. Lys-328 bears the N6-succinyllysine; alternate mark. Lys-329 bears the N6-malonyllysine; alternate mark. An N6-succinyllysine; alternate modification is found at Lys-335.

This sequence belongs to the LDH/MDH superfamily. MDH type 1 family. As to quaternary structure, homodimer. Acetylation is enhanced after treatment either with trichostin A (TCA) or with nicotinamide (NAM) with the appearance of tri- and tetraacetylations. Glucose also increases acetylation.

It localises to the mitochondrion matrix. The catalysed reaction is (S)-malate + NAD(+) = oxaloacetate + NADH + H(+). Its activity is regulated as follows. Enzyme activity is enhanced by acetylation. The polypeptide is Malate dehydrogenase, mitochondrial (MDH2) (Sus scrofa (Pig)).